The following is a 517-amino-acid chain: Splicing factor cactin (517 aa).

Residues 1 to 14 (MAFRDSTRDFNRSR) are compositionally biased toward basic and acidic residues. The disordered stretch occupies residues 1–59 (MAFRDSTRDFNRSRPEKRHASRSSSPRSFRPSNQNARANYNLPRVRDAMKEEERSRETK). Low complexity predominate over residues 22–32 (RSSSPRSFRPS). Over residues 44-59 (RVRDAMKEEERSRETK) the composition is skewed to basic and acidic residues.

Belongs to the CACTIN family. As to quaternary structure, interacts with sde2. Interacts with cdc5.

Its function is as follows. Plays a role in pre-mRNA splicing by facilitating excision of introns featuring long spacing between the branchpoint and 3'-splice site (ss). Recruited to the spliceosome by sde2, which may enable folding of the RNA between the BP and 3'-ss to guide the splice site towards the spliceosome's catalytic center. Assists the splicing of several components involved in chromatin organization. This chain is Splicing factor cactin, found in Schizosaccharomyces pombe (strain 972 / ATCC 24843) (Fission yeast).